Consider the following 215-residue polypeptide: Cytochrome b6 (215 aa).

Residues I32 to F52 form a helical membrane-spanning segment. A heme c-binding site is contributed by C35. 2 residues coordinate heme b: H86 and H100. 3 helical membrane passes run A90–F110, L116–Y136, and L186–I206. Heme b contacts are provided by H187 and H202.

This sequence belongs to the cytochrome b family. PetB subfamily. As to quaternary structure, the 4 large subunits of the cytochrome b6-f complex are cytochrome b6, subunit IV (17 kDa polypeptide, PetD), cytochrome f and the Rieske protein, while the 4 small subunits are PetG, PetL, PetM and PetN. The complex functions as a dimer. It depends on heme b as a cofactor. Heme c serves as cofactor.

Its subcellular location is the plastid. The protein localises to the chloroplast thylakoid membrane. Its function is as follows. Component of the cytochrome b6-f complex, which mediates electron transfer between photosystem II (PSII) and photosystem I (PSI), cyclic electron flow around PSI, and state transitions. This is Cytochrome b6 from Daucus carota (Wild carrot).